Reading from the N-terminus, the 397-residue chain is Mycinamicin IV hydroxylase/epoxidase (397 aa).

The interval 63–86 (RGPSMTRDEPRTRPEMVKGGLLSM) is disordered. Basic and acidic residues predominate over residues 68-78 (TRDEPRTRPEM). G81 lines the substrate pocket. Heme-binding residues include H91, R95, R288, H344, and C346.

The protein belongs to the cytochrome P450 family. Heme serves as cofactor.

The protein operates within antibiotic biosynthesis; mycinamicin biosynthesis. Its function is as follows. Involved in the biosynthesis of mycinamicin, a 16-membered macrolide antibiotic. Catalyzes consecutive hydroxylation (at C14) and epoxidation (at C12-C13) reactions with mycinamicin IV as initial substrate, leading to mycinamicin II. These reactions require prior dimethylation of 6-deoxyallose to mycinose for effective conversion by the dual function MycG enzyme. The protein is Mycinamicin IV hydroxylase/epoxidase of Micromonospora griseorubida.